Here is a 407-residue protein sequence, read N- to C-terminus: Methylenetetrahydrofolate--tRNA-(uracil-5-)-methyltransferase TrmFO (407 aa).

9–14 contacts FAD; the sequence is GAGLAG.

It belongs to the MnmG family. TrmFO subfamily. FAD serves as cofactor.

It localises to the cytoplasm. The catalysed reaction is uridine(54) in tRNA + (6R)-5,10-methylene-5,6,7,8-tetrahydrofolate + NADH + H(+) = 5-methyluridine(54) in tRNA + (6S)-5,6,7,8-tetrahydrofolate + NAD(+). It catalyses the reaction uridine(54) in tRNA + (6R)-5,10-methylene-5,6,7,8-tetrahydrofolate + NADPH + H(+) = 5-methyluridine(54) in tRNA + (6S)-5,6,7,8-tetrahydrofolate + NADP(+). Its function is as follows. Catalyzes the folate-dependent formation of 5-methyl-uridine at position 54 (M-5-U54) in all tRNAs. The polypeptide is Methylenetetrahydrofolate--tRNA-(uracil-5-)-methyltransferase TrmFO (Lactobacillus helveticus (strain DPC 4571)).